The chain runs to 398 residues: Lysophospholipid transporter LplT (398 aa).

12 helical membrane passes run 16–36 (MIAV…LLFA), 53–73 (ILQM…GQVA), 91–111 (AGAL…LVGV), 139–159 (LMEA…GILA), 163–183 (IVAA…ANLY), 195–213 (SWTP…VVLW), 227–247 (LFWG…PVAL), 253–273 (ATPT…AGAA), 286–306 (MPAG…TTLF), 310–330 (ALLL…NALL), 344–364 (IAVQ…LYSL), and 372–392 (VVGV…ALWL).

This sequence belongs to the major facilitator superfamily. LplT (TC 2.A.1.42) family.

The protein localises to the cell inner membrane. Catalyzes the facilitated diffusion of 2-acyl-glycero-3-phosphoethanolamine (2-acyl-GPE) into the cell. This Serratia proteamaculans (strain 568) protein is Lysophospholipid transporter LplT.